Reading from the N-terminus, the 303-residue chain is Recombination-associated protein RdgC (303 aa).

This sequence belongs to the RdgC family.

The protein localises to the cytoplasm. It localises to the nucleoid. Its function is as follows. May be involved in recombination. The polypeptide is Recombination-associated protein RdgC (Salmonella newport (strain SL254)).